A 251-amino-acid polypeptide reads, in one-letter code: MDMKRRIHLELRNRTPAAVRELVLDNCKSNDGKIEGLTAEFVNLEFLSLINVGLISVSNLPKLPKLKKLELSENRIFGGLDMLAEKLPNLTHLNLSGNKLKDISTLEPLKKLECLKSLDLFNCEVTNLNDYRESVFKLLPQLTYLDGYDREDQEAPDSDAEVDGVDEEEEDEEGEDEEDEDDEDGEEEEFDEEDDEDEDVEGDEDDDEVSEEEEEFGLDEEDEDEDEDEEEEEGGKGEKRKRETDDEGEDD.

LRR repeat units follow at residues 16–40, 43–64, and 65–84; these read PAAV…LTAE, NLEF…PKLP, and KLKK…DMLA. Lys-86 carries the N6-acetyllysine modification. One copy of the LRR 4 repeat lies at 89 to 110; it reads NLTHLNLSGNKLKDISTLEPLK. The 39-residue stretch at 123–161 folds into the LRRCT domain; sequence CEVTNLNDYRESVFKLLPQLTYLDGYDREDQEAPDSDAE. Residues 149–233 show a composition bias toward acidic residues; the sequence is DREDQEAPDS…DEDEDEEEEE (85 aa). The tract at residues 149-251 is disordered; that stretch reads DREDQEAPDS…RETDDEGEDD (103 aa). Ser-158 is modified (phosphoserine). Residues 234–244 are compositionally biased toward basic and acidic residues; that stretch reads GGKGEKRKRET. A Nuclear localization signal motif is present at residues 239-242; the sequence is KRKR. The residue at position 244 (Thr-244) is a Phosphothreonine.

The protein belongs to the ANP32 family. As to quaternary structure, interacts with histones H3 and H4. Interacts with KLF5; this interaction induces promoter region-specific histone incorporation and inhibition of histone acetylation by ANP32B. (Microbial infection) Interacts with Sendai virus protein M. In terms of assembly, (Microbial infection) Interacts with Measles virus protein M. As to quaternary structure, (Microbial infection) Interacts with Hendra virus protein M; this interaction promotes nuclear localization of M. (Microbial infection) Interacts with influenza virus B protein PB2; this interaction strongly supports influenza B virus replication. Post-translationally, some glutamate residues are glycylated by TTLL8. This modification occurs exclusively on glutamate residues and results in a glycine chain on the gamma-carboxyl group. Directly cleaved by caspase-3/CASP3. Expressed in heart, lung, pancreas, prostate and in spleen, thymus and placenta.

The protein localises to the nucleus. The protein resides in the cytoplasm. Its function is as follows. Multifunctional protein that is involved in the regulation of many processes including cell proliferation, apoptosis, cell cycle progression or transcription. Regulates the proliferation of neuronal stem cells, differentiation of leukemic cells and progression from G1 to S phase of the cell cycle. As negative regulator of caspase-3-dependent apoptosis, may act as an antagonist of ANP32A in regulating tissue homeostasis. Exhibits histone chaperone properties, able to recruit histones to certain promoters, thus regulating the transcription of specific genes. Also plays an essential role in the nucleocytoplasmic transport of specific mRNAs via the uncommon nuclear mRNA export receptor XPO1/CRM1. Participates in the regulation of adequate adaptive immune responses by acting on mRNA expression and cell proliferation. (Microbial infection) Plays an essential role in influenza A and B viral genome replication. Also plays a role in foamy virus mRNA export from the nucleus to the cytoplasm. The polypeptide is Acidic leucine-rich nuclear phosphoprotein 32 family member B (ANP32B) (Homo sapiens (Human)).